Here is a 327-residue protein sequence, read N- to C-terminus: Protoheme IX farnesyltransferase (327 aa).

8 helical membrane-spanning segments follow: residues 35–55, 60–80, 106–126, 129–149, 157–177, 185–205, 234–254, and 283–303; these read LIPL…GWPL, LVCT…LNCL, SAFI…VSGV, LAAG…TALL, IVIG…AATG, WLFA…ALLL, GWIT…GGAF, and AKAL…LLIL.

The protein belongs to the UbiA prenyltransferase family. Protoheme IX farnesyltransferase subfamily.

Its subcellular location is the cell inner membrane. It catalyses the reaction heme b + (2E,6E)-farnesyl diphosphate + H2O = Fe(II)-heme o + diphosphate. It functions in the pathway porphyrin-containing compound metabolism; heme O biosynthesis; heme O from protoheme: step 1/1. Its function is as follows. Converts heme B (protoheme IX) to heme O by substitution of the vinyl group on carbon 2 of heme B porphyrin ring with a hydroxyethyl farnesyl side group. In Synechococcus sp. (strain CC9605), this protein is Protoheme IX farnesyltransferase.